The sequence spans 64 residues: Alpha-conotoxin-like Lp1.8 (64 aa).

An N-terminal signal peptide occupies residues 1–21; that stretch reads MGMRMMFTMFLLVVLTTTVVS. The propeptide occupies 22–41; it reads FNSDRESNHENRRTSNQITR. Cystine bridges form between C47-C53 and C48-C61. Residues 49-51 form a lacks the Ser-Xaa-Pro motif that is crucial for potent interaction with nAChR region; it reads KDP.

This sequence belongs to the conotoxin A superfamily. As to expression, expressed by the venom duct.

Its subcellular location is the secreted. Functionally, alpha-conotoxins act on postsynaptic membranes, they bind to the nicotinic acetylcholine receptors (nAChR) and thus inhibit them. Has possibly a distinct nAChR binding mode from other alpha-conotoxins, due to a different three residue motif (Lys-Xaa-Pro instead of the conserved Ser-Xaa-Pro motif). The protein is Alpha-conotoxin-like Lp1.8 of Conus leopardus (Leopard cone).